A 354-amino-acid polypeptide reads, in one-letter code: DNA integrity scanning protein DisA (354 aa).

In terms of domain architecture, DAC spans 6–144; the sequence is GMKIKDTLKI…GDIKYVLRDS (139 aa). ATP contacts are provided by residues G73, L91, and 104 to 108; that span reads TRHRT.

Belongs to the DisA family. As to quaternary structure, homooctamer. Mg(2+) serves as cofactor.

It carries out the reaction 2 ATP = 3',3'-c-di-AMP + 2 diphosphate. Its function is as follows. Participates in a DNA-damage check-point that is active prior to asymmetric division when DNA is damaged. DisA forms globular foci that rapidly scan along the chromosomes during sporulation, searching for lesions. When a lesion is present, DisA pauses at the lesion site. This triggers a cellular response that culminates in a temporary block in sporulation initiation. Also has diadenylate cyclase activity, catalyzing the condensation of 2 ATP molecules into cyclic di-AMP (c-di-AMP). c-di-AMP acts as a signaling molecule that couples DNA integrity with progression of sporulation. The rise in c-di-AMP level generated by DisA while scanning the chromosome, operates as a positive signal that advances sporulation; upon encountering a lesion, the DisA focus arrests at the damaged site and halts c-di-AMP synthesis. The chain is DNA integrity scanning protein DisA from Clostridium botulinum (strain Eklund 17B / Type B).